The chain runs to 110 residues: Endoribonuclease SymE (110 aa).

One can recognise a SpoVT-AbrB domain in the interval 29–74 (SRYPDYTRIPALTMKGQWLEAAGFATGTEVDVRVMNGCIVLTAQQP).

This sequence belongs to the SymE family.

It is found in the cytoplasm. Involved in the degradation and recycling of damaged RNA. It is itself a target for degradation by the ATP-dependent protease Lon. The chain is Endoribonuclease SymE from Salmonella heidelberg (strain SL476).